Consider the following 518-residue polypeptide: MTHLQFDNRLRAQLPGDPEQGPRRREVLAAWSAVRPTPVAAPTLLAYSADVAQRLGLRAEDLASPQFAEVFGGNALYPGMQPWAVNYGGHQFGHWAGQLGDGRAISLGEAIGVDGGRYELQLKGAGPTPYSRGADGRAVLRSSIREFLCSEAMHYLGVPTTRALSLVGTGDAVVRDMFYDGHPRREPGAIVCRVAPSFIRFGNFELPAARGDVDLLRQWVDFTLARDFPDLPGSGEDRIAAWFGQVCERTAVMVAHWMRVGFVHGVMNTDNMSILGLTIDYGPYGWVDDYDPDWTPNTTDAQGRRYRFGTQPQVAYWNLGRLAQALSPLFGDAASLQAGLDQFRDTYLACDRRDTAAKLGLAECQDEDLHLIDDLRALMREAEMDMTLTFRGLVDLSPQQPDASVLREAFYDETKRAAQAPALGAWLQRYAARCLQDGASDAVRASRMRAANPRYVLRNYLAQQAIDQAEQGDLSGVHALLEVMQRPYDDQPRRESFAAKRPDWARDRAGCSMLSCSS.

Residues 1-10 (MTHLQFDNRL) are compositionally biased toward basic and acidic residues. The interval 1 to 23 (MTHLQFDNRLRAQLPGDPEQGPR) is disordered. 8 residues coordinate ATP: Gly-100, Gly-102, Arg-103, Lys-123, Asp-135, Gly-136, Arg-193, and Arg-200. Asp-270 functions as the Proton acceptor in the catalytic mechanism. Positions 271 and 280 each coordinate Mg(2+). ATP is bound at residue Asp-280.

The protein belongs to the SELO family. It depends on Mg(2+) as a cofactor. Mn(2+) serves as cofactor.

It catalyses the reaction L-seryl-[protein] + ATP = 3-O-(5'-adenylyl)-L-seryl-[protein] + diphosphate. It carries out the reaction L-threonyl-[protein] + ATP = 3-O-(5'-adenylyl)-L-threonyl-[protein] + diphosphate. The catalysed reaction is L-tyrosyl-[protein] + ATP = O-(5'-adenylyl)-L-tyrosyl-[protein] + diphosphate. The enzyme catalyses L-histidyl-[protein] + UTP = N(tele)-(5'-uridylyl)-L-histidyl-[protein] + diphosphate. It catalyses the reaction L-seryl-[protein] + UTP = O-(5'-uridylyl)-L-seryl-[protein] + diphosphate. It carries out the reaction L-tyrosyl-[protein] + UTP = O-(5'-uridylyl)-L-tyrosyl-[protein] + diphosphate. Nucleotidyltransferase involved in the post-translational modification of proteins. It can catalyze the addition of adenosine monophosphate (AMP) or uridine monophosphate (UMP) to a protein, resulting in modifications known as AMPylation and UMPylation. The protein is Protein nucleotidyltransferase YdiU of Xanthomonas campestris pv. campestris (strain B100).